We begin with the raw amino-acid sequence, 121 residues long: Large ribosomal subunit protein uL18 (121 aa).

This sequence belongs to the universal ribosomal protein uL18 family. In terms of assembly, part of the 50S ribosomal subunit; part of the 5S rRNA/L5/L18/L25 subcomplex. Contacts the 5S and 23S rRNAs.

In terms of biological role, this is one of the proteins that bind and probably mediate the attachment of the 5S RNA into the large ribosomal subunit, where it forms part of the central protuberance. In Leptothrix cholodnii (strain ATCC 51168 / LMG 8142 / SP-6) (Leptothrix discophora (strain SP-6)), this protein is Large ribosomal subunit protein uL18.